We begin with the raw amino-acid sequence, 142 residues long: Hemoglobin subunit alpha-1 (142 aa).

The 141-residue stretch at 2–142 folds into the Globin domain; the sequence is VLSPADKTNI…VSTVLTSKYR (141 aa). Histidine 59 is a binding site for O2. Histidine 88 is a binding site for heme b.

This sequence belongs to the globin family. In terms of assembly, heterotetramer of two alpha chains and two beta chains. Red blood cells.

Its function is as follows. Involved in oxygen transport from the lung to the various peripheral tissues. The protein is Hemoglobin subunit alpha-1 of Arctocephalus galapagoensis (Galapagoes fur seal).